The primary structure comprises 117 residues: Large ribosomal subunit protein bL20c (117 aa).

Belongs to the bacterial ribosomal protein bL20 family.

The protein localises to the plastid. It is found in the chloroplast. Its function is as follows. Binds directly to 23S ribosomal RNA and is necessary for the in vitro assembly process of the 50S ribosomal subunit. It is not involved in the protein synthesizing functions of that subunit. The protein is Large ribosomal subunit protein bL20c of Phalaenopsis aphrodite subsp. formosana (Moth orchid).